A 655-amino-acid chain; its full sequence is Carboxypeptidase S1 homolog B (655 aa).

The first 21 residues, 1 to 21 (MRPFARAALCLLAAAGHLAQA), serve as a signal peptide directing secretion. Residues Cys51 and Cys123 are joined by a disulfide bond. N-linked (GlcNAc...) asparagine glycosylation is found at Asn130, Asn163, and Asn186. Residue Ser240 is part of the active site. N-linked (GlcNAc...) asparagine glycans are attached at residues Asn266, Asn302, and Asn311. 2 disulfides stabilise this stretch: Cys328–Cys364 and Cys335–Cys357. Asn414 carries N-linked (GlcNAc...) asparagine glycosylation. Residue Asp459 is part of the active site. Position 462 (Cys462) interacts with substrate. Residues Asn475, Asn493, and Asn506 are each glycosylated (N-linked (GlcNAc...) asparagine). His517 is an active-site residue. Glu518 serves as a coordination point for substrate. 2 N-linked (GlcNAc...) asparagine glycosylation sites follow: Asn598 and Asn612. Gly631 carries the GPI-anchor amidated glycine lipid modification. Positions 632–655 (AALVSGRIKFHVHVIKSFDYYIFI) are cleaved as a propeptide — removed in mature form.

It belongs to the peptidase S10 family.

Its subcellular location is the cell membrane. It catalyses the reaction Preferential release of a C-terminal arginine or lysine residue.. Its function is as follows. Extracellular serine carboxypeptidase that contributes to pathogenicity. The polypeptide is Carboxypeptidase S1 homolog B (SCPB) (Arthroderma otae (strain ATCC MYA-4605 / CBS 113480) (Microsporum canis)).